Reading from the N-terminus, the 464-residue chain is ATP synthase subunit beta (464 aa).

Residue 153–160 (GGAGVGKT) participates in ATP binding.

This sequence belongs to the ATPase alpha/beta chains family. In terms of assembly, F-type ATPases have 2 components, CF(1) - the catalytic core - and CF(0) - the membrane proton channel. CF(1) has five subunits: alpha(3), beta(3), gamma(1), delta(1), epsilon(1). CF(0) has three main subunits: a(1), b(2) and c(9-12). The alpha and beta chains form an alternating ring which encloses part of the gamma chain. CF(1) is attached to CF(0) by a central stalk formed by the gamma and epsilon chains, while a peripheral stalk is formed by the delta and b chains.

Its subcellular location is the cell membrane. The catalysed reaction is ATP + H2O + 4 H(+)(in) = ADP + phosphate + 5 H(+)(out). Functionally, produces ATP from ADP in the presence of a proton gradient across the membrane. The catalytic sites are hosted primarily by the beta subunits. The sequence is that of ATP synthase subunit beta from Alkaliphilus metalliredigens (strain QYMF).